A 312-amino-acid polypeptide reads, in one-letter code: tRNA pseudouridine synthase B (312 aa).

Residue aspartate 37 is the Nucleophile of the active site.

The protein belongs to the pseudouridine synthase TruB family. Type 1 subfamily.

It catalyses the reaction uridine(55) in tRNA = pseudouridine(55) in tRNA. Responsible for synthesis of pseudouridine from uracil-55 in the psi GC loop of transfer RNAs. This is tRNA pseudouridine synthase B from Thermus thermophilus (strain ATCC BAA-163 / DSM 7039 / HB27).